The sequence spans 260 residues: Ubiquinone/menaquinone biosynthesis C-methyltransferase UbiE (260 aa).

S-adenosyl-L-methionine is bound by residues T83, D104, 132–133 (NA), and S149.

The protein belongs to the class I-like SAM-binding methyltransferase superfamily. MenG/UbiE family.

The enzyme catalyses a 2-demethylmenaquinol + S-adenosyl-L-methionine = a menaquinol + S-adenosyl-L-homocysteine + H(+). It carries out the reaction a 2-methoxy-6-(all-trans-polyprenyl)benzene-1,4-diol + S-adenosyl-L-methionine = a 5-methoxy-2-methyl-3-(all-trans-polyprenyl)benzene-1,4-diol + S-adenosyl-L-homocysteine + H(+). The protein operates within quinol/quinone metabolism; menaquinone biosynthesis; menaquinol from 1,4-dihydroxy-2-naphthoate: step 2/2. Its pathway is cofactor biosynthesis; ubiquinone biosynthesis. In terms of biological role, methyltransferase required for the conversion of demethylmenaquinol (DMKH2) to menaquinol (MKH2) and the conversion of 2-polyprenyl-6-methoxy-1,4-benzoquinol (DDMQH2) to 2-polyprenyl-3-methyl-6-methoxy-1,4-benzoquinol (DMQH2). This Vibrio cholerae serotype O1 (strain ATCC 39315 / El Tor Inaba N16961) protein is Ubiquinone/menaquinone biosynthesis C-methyltransferase UbiE.